A 347-amino-acid polypeptide reads, in one-letter code: Quinolinate synthase (347 aa).

Iminosuccinate is bound by residues His-47 and Ser-68. A [4Fe-4S] cluster-binding site is contributed by Cys-113. Residues 139–141 and Ser-156 contribute to the iminosuccinate site; that span reads YAN. Cys-200 lines the [4Fe-4S] cluster pocket. Iminosuccinate contacts are provided by residues 226–228 and Thr-243; that span reads HPE. Cys-297 is a binding site for [4Fe-4S] cluster.

Belongs to the quinolinate synthase family. Type 1 subfamily. It depends on [4Fe-4S] cluster as a cofactor.

It is found in the cytoplasm. It catalyses the reaction iminosuccinate + dihydroxyacetone phosphate = quinolinate + phosphate + 2 H2O + H(+). The protein operates within cofactor biosynthesis; NAD(+) biosynthesis; quinolinate from iminoaspartate: step 1/1. Catalyzes the condensation of iminoaspartate with dihydroxyacetone phosphate to form quinolinate. This Escherichia coli O45:K1 (strain S88 / ExPEC) protein is Quinolinate synthase.